Consider the following 161-residue polypeptide: Large ribosomal subunit protein uL15 (161 aa).

A disordered region spans residues 1-43 (MKLSDIADNAGARKKRMRVGRGIGSGKGKTSGRGGKGQTARSG). Residues 21-37 (RGIGSGKGKTSGRGGKG) are compositionally biased toward gly residues.

It belongs to the universal ribosomal protein uL15 family. Part of the 50S ribosomal subunit.

Binds to the 23S rRNA. The sequence is that of Large ribosomal subunit protein uL15 from Bradyrhizobium sp. (strain BTAi1 / ATCC BAA-1182).